A 1149-amino-acid chain; its full sequence is Guanine nucleotide exchange factor DBS (1149 aa).

Residues 52-224 (MATASDEIMH…DLGGTLDYCH (173 aa)) form the CRAL-TRIO domain. One copy of the Spectrin repeat lies at 355 to 454 (HFEQGFREVK…SEVTRRRDLL (100 aa)). Phosphoserine is present on residues S457, S462, S471, and S480. A coiled-coil region spans residues 503–528 (LETGAENKIQELNKIYKEYECILNQD). The interval 555-627 (KKLAAKQTRP…RTSSTGEEEE (73 aa)) is disordered. Positions 583-594 (PGSWRSSENSSS) are enriched in low complexity. The segment covering 607 to 616 (AKSEMSEPRQ) has biased composition (basic and acidic residues). The residue at position 621 (S621) is a Phosphoserine. T622 carries the post-translational modification Phosphothreonine. Residues 632–812 (LRRHVMNELL…LGILKAVNDS (181 aa)) enclose the DH domain. Positions 830–946 (KLLMQGSFSV…WVNEIRKVLT (117 aa)) constitute a PH domain. Residues 956–1033 (SQHRALEQSH…EAPEEDGGWS (78 aa)) are disordered. The span at 964–978 (SHSLPLPTPASTSPT) shows a compositional bias: low complexity. A phosphoserine mark is found at S1033, S1034, S1041, and S1042. The 62-residue stretch at 1055 to 1116 (LVPGKYTVLM…PASSLATLLG (62 aa)) folds into the SH3 domain.

The protein belongs to the MCF2 family. In terms of assembly, interacts with GTP-bound RAC1. Interacts with CDC42. Interacts with RHOA. Interacts with CCPG1, which results in specific inhibition of its exchange activity toward RHOA, but does not affect its activity on CDC42. Post-translationally, mainly phosphorylated on serine. Highest expression in the brain, where it is found in neurons and alpha-tanycytes (at protein level). Detected in brain, and at lower levels in the heart.

It localises to the cytoplasm. The protein resides in the cell membrane. Its function is as follows. Guanine nucleotide exchange factor that catalyzes guanine nucleotide exchange on RHOA and CDC42, and thereby contributes to the regulation of RHOA and CDC42 signaling pathways. Seems to lack activity with RAC1. Becomes activated and highly tumorigenic by truncation of the N-terminus. The chain is Guanine nucleotide exchange factor DBS (Mcf2l) from Rattus norvegicus (Rat).